We begin with the raw amino-acid sequence, 146 residues long: Angiogenin (146 aa).

The signal sequence occupies residues 1 to 24 (MVMGLGLFLLVFMLGLGLTPPTLA). Pyrrolidone carboxylic acid is present on glutamine 25. The Proton acceptor role is filled by histidine 37. A tRNA-binding site is contributed by arginine 45. Disulfide bonds link cysteine 50/cysteine 105, cysteine 63/cysteine 116, and cysteine 81/cysteine 131. The short motif at 55-59 (RRRGL) is the Nucleolar localization signal element. 2 residues coordinate tRNA: cysteine 105 and isoleucine 127. Histidine 138 (proton donor) is an active-site residue.

This sequence belongs to the pancreatic ribonuclease family. Homodimer. Interacts with RNH1; inhibiting ANG ribonuclease activity. Interacts with PCNA.

The protein localises to the secreted. The protein resides in the nucleus. It localises to the nucleolus. It is found in the cytoplasm. Its subcellular location is the stress granule. Its activity is regulated as follows. Has weak tRNA ribonuclease activity by itself due to partial autoinhibition by its C-terminus, which folds into a short alpha-helix that partially occludes the substrate-binding site. In absence of stress, the ribonuclease activity is inhibited by RNH1 in the cytoplasm. In response to stress, dissociates from RNH1 in the cytoplasm and associates with cytoplasmic ribosomes with vacant A-sites: ribosomes directly activate the tRNA ribonuclease activity of ANG by refolding the C-terminal alpha-helix. In response to stress, the angiogenic activity of ANG is inhibited by RNH1 in the nucleus. Its function is as follows. Secreted ribonuclease that can either promote or restrict cell proliferation of target cells, depending on the context. Endocytosed in target cells via its receptor PLXNB2 and translocates to the cytoplasm or nucleus. Under stress conditions, localizes to the cytoplasm and promotes the assembly of stress granules (SGs): specifically cleaves a subset of tRNAs within anticodon loops to produce tRNA-derived stress-induced fragments (tiRNAs), resulting in translation repression and inhibition of cell proliferation. tiRNas also prevent formation of apoptosome, thereby promoting cell survival. Preferentially cleaves RNAs between a pyrimidine and an adenosine residue, suggesting that it cleaves the anticodon loop of tRNA(Ala) (32-UUAGCAU-38) after positions 33 and 36. Cleaves a subset of tRNAs, including tRNA(Ala), tRNA(Glu), tRNA(Gly), tRNA(Lys), tRNA(Val), tRNA(His), tRNA(Asp) and tRNA(Sec). Under growth conditions and in differentiated cells, translocates to the nucleus and stimulates ribosomal RNA (rRNA) transcription, including that containing the initiation site sequences of 45S rRNA, thereby promoting cell growth and proliferation. Angiogenin induces vascularization of normal and malignant tissues via its ability to promote rRNA transcription. Involved in hematopoietic stem and progenitor cell (HSPC) growth and survival by promoting rRNA transcription in growth conditions and inhibiting translation in response to stress, respectively. Mediates the crosstalk between myeloid and intestinal epithelial cells to protect the intestinal epithelial barrier integrity: secreted by myeloid cells and promotes intestinal epithelial cells proliferation and survival. Also mediates osteoclast-endothelial cell crosstalk in growing bone: produced by osteoclasts and protects the neighboring vascular cells against senescence by promoting rRNA transcription. This chain is Angiogenin (ANG), found in Trachypithecus francoisi (Francois' leaf monkey).